Here is a 338-residue protein sequence, read N- to C-terminus: Glycerol-1-phosphate dehydrogenase [NAD(P)+] (338 aa).

NAD(+)-binding positions include 81–85 and 103–106; these read GRPLD and TSAS. D108 contacts substrate. An NAD(+)-binding site is contributed by S112. D157 is a binding site for substrate. The Zn(2+) site is built by D157 and H238. H242 lines the substrate pocket. H256 provides a ligand contact to Zn(2+).

This sequence belongs to the glycerol-1-phosphate dehydrogenase family. As to quaternary structure, homodimer. Zn(2+) is required as a cofactor.

It localises to the cytoplasm. It carries out the reaction sn-glycerol 1-phosphate + NAD(+) = dihydroxyacetone phosphate + NADH + H(+). The enzyme catalyses sn-glycerol 1-phosphate + NADP(+) = dihydroxyacetone phosphate + NADPH + H(+). Its pathway is membrane lipid metabolism; glycerophospholipid metabolism. Catalyzes the NAD(P)H-dependent reduction of dihydroxyacetonephosphate (DHAP or glycerone phosphate) to glycerol 1-phosphate (G1P). The G1P thus generated is used as the glycerophosphate backbone of phospholipids in the cellular membranes of Archaea. The protein is Glycerol-1-phosphate dehydrogenase [NAD(P)+] of Pyrobaculum calidifontis (strain DSM 21063 / JCM 11548 / VA1).